Reading from the N-terminus, the 332-residue chain is Glycerol-3-phosphate dehydrogenase [NAD(P)+] (332 aa).

Residues Ser-11, Phe-12, Lys-32, and Lys-106 each contribute to the NADPH site. Lys-106, Gly-137, and Ser-139 together coordinate sn-glycerol 3-phosphate. Ala-141 contributes to the NADPH binding site. 5 residues coordinate sn-glycerol 3-phosphate: Lys-192, Asp-245, Ser-255, Arg-256, and Asn-257. Lys-192 functions as the Proton acceptor in the catalytic mechanism. Position 256 (Arg-256) interacts with NADPH. NADPH-binding residues include Val-280 and Glu-282.

This sequence belongs to the NAD-dependent glycerol-3-phosphate dehydrogenase family.

It localises to the cytoplasm. It catalyses the reaction sn-glycerol 3-phosphate + NAD(+) = dihydroxyacetone phosphate + NADH + H(+). The catalysed reaction is sn-glycerol 3-phosphate + NADP(+) = dihydroxyacetone phosphate + NADPH + H(+). Its pathway is membrane lipid metabolism; glycerophospholipid metabolism. Its function is as follows. Catalyzes the reduction of the glycolytic intermediate dihydroxyacetone phosphate (DHAP) to sn-glycerol 3-phosphate (G3P), the key precursor for phospholipid synthesis. The protein is Glycerol-3-phosphate dehydrogenase [NAD(P)+] of Staphylococcus aureus (strain USA300).